The following is a 103-amino-acid chain: Ig kappa-b4 chain C region (103 aa).

The region spanning 5-95 is the Ig-like domain; the sequence is PTVLIFPPAA…KVTQGTTSVV (91 aa). A disulfide bridge connects residues C26 and C85.

The sequence is that of Ig kappa-b4 chain C region from Oryctolagus cuniculus (Rabbit).